Here is a 164-residue protein sequence, read N- to C-terminus: Phosphopantetheine adenylyltransferase (164 aa).

Ser10 is a binding site for substrate. ATP-binding positions include 10–11 and His18; that span reads SF. Substrate contacts are provided by Lys42, Met74, and Arg88. Residues 89–91, Glu99, and 124–130 each bind ATP; these read GLR and YFFVSAR.

The protein belongs to the bacterial CoaD family. As to quaternary structure, homohexamer. Mg(2+) is required as a cofactor.

The protein localises to the cytoplasm. The enzyme catalyses (R)-4'-phosphopantetheine + ATP + H(+) = 3'-dephospho-CoA + diphosphate. The protein operates within cofactor biosynthesis; coenzyme A biosynthesis; CoA from (R)-pantothenate: step 4/5. In terms of biological role, reversibly transfers an adenylyl group from ATP to 4'-phosphopantetheine, yielding dephospho-CoA (dPCoA) and pyrophosphate. The protein is Phosphopantetheine adenylyltransferase of Anaeromyxobacter dehalogenans (strain 2CP-C).